A 130-amino-acid chain; its full sequence is Protein ApaG (130 aa).

Positions 3 to 127 constitute an ApaG domain; that stretch reads RAVTRQIEVT…FSLDSPDNKR (125 aa).

The sequence is that of Protein ApaG from Bradyrhizobium diazoefficiens (strain JCM 10833 / BCRC 13528 / IAM 13628 / NBRC 14792 / USDA 110).